A 174-amino-acid polypeptide reads, in one-letter code: Large ribosomal subunit protein uL10 (174 aa).

It belongs to the universal ribosomal protein uL10 family. In terms of assembly, part of the ribosomal stalk of the 50S ribosomal subunit. The N-terminus interacts with L11 and the large rRNA to form the base of the stalk. The C-terminus forms an elongated spine to which L12 dimers bind in a sequential fashion forming a multimeric L10(L12)X complex.

Functionally, forms part of the ribosomal stalk, playing a central role in the interaction of the ribosome with GTP-bound translation factors. This Geotalea uraniireducens (strain Rf4) (Geobacter uraniireducens) protein is Large ribosomal subunit protein uL10.